The following is a 414-amino-acid chain: TAR DNA-binding protein 43 (414 aa).

Residues Lys-79, Lys-84, Lys-95, Lys-102, and Lys-181 each participate in a glycyl lysine isopeptide (Lys-Gly) (interchain with G-Cter in SUMO2) cross-link. Residues 82 to 98 (KRKMDETDASSAVKVKR) carry the Nuclear localization signal motif. 2 RRM domains span residues 104 to 200 (SDLI…RCTE) and 191 to 262 (RKVF…NAEP). Ser-183 carries the phosphoserine modification. The interaction with UBQLN2 stretch occupies residues 216–414 (DVMDVFIPKP…MDSKSSGWGM (199 aa)). Positions 239-250 (IAQSLCGEDLII) match the Nuclear export signal motif. Positions 261 to 274 (EPKHNSNRQLERSG) are enriched in basic and acidic residues. 2 disordered regions span residues 261–303 (EPKH…GNNQ) and 341–373 (ASQQNQSGPSGNNQNQGNMQREPNQAFGSGNNS). A Glycyl lysine isopeptide (Lys-Gly) (interchain with G-Cter in SUMO2) cross-link involves residue Lys-263. Gly residues predominate over residues 275-303 (RFGGNPGGFGNQGGFGNSRGGGAGLGNNQ). Position 292 is a phosphoserine (Ser-292). Arg-293 is subject to Omega-N-methylarginine. The segment covering 342–358 (SQQNQSGPSGNNQNQGN) has biased composition (low complexity).

Homodimer. Homooligomer (via its N-terminal domain). Interacts with BRDT. Binds specifically to pyrimidine-rich motifs of TAR DNA and to single stranded TG repeated sequences. Binds to RNA, specifically to UG repeated sequences with a minimum of six contiguous repeats. Interacts with ATXN2; the interaction is RNA-dependent. Interacts with MATR3. Interacts with UBQLN2. Interacts with HNRNPA2B1. Interacts with ZNF106. Interacts with CNOT7/CAF1. Interacts with CRY2. Interacts with PPIA/CYPA; the interaction is dependent on RNA-binding activity of TARDBP and PPIase activity of PPIA/CYPA and acetylation of PPIA/CYPA at 'Lys-125' favors the interaction. Post-translationally, hyperphosphorylated in hippocampus, neocortex, and spinal cord from individuals affected with ALS and FTLDU. Phosphorylated upon cellular stress. Ubiquitinated in hippocampus, neocortex, and spinal cord from individuals affected with ALS and FTLDU. In terms of processing, cleaved to generate C-terminal fragments in hippocampus, neocortex, and spinal cord from individuals affected with ALS and FTLDU. As to expression, ubiquitously expressed. In particular, expression is high in pancreas, placenta, lung, genital tract and spleen.

The protein resides in the nucleus. It is found in the cytoplasm. Its subcellular location is the stress granule. It localises to the mitochondrion. RNA-binding protein that is involved in various steps of RNA biogenesis and processing. Preferentially binds, via its two RNA recognition motifs RRM1 and RRM2, to GU-repeats on RNA molecules predominantly localized within long introns and in the 3'UTR of mRNAs. In turn, regulates the splicing of many non-coding and protein-coding RNAs including proteins involved in neuronal survival, as well as mRNAs that encode proteins relevant for neurodegenerative diseases. Plays a role in maintaining mitochondrial homeostasis by regulating the processing of mitochondrial transcripts. Also regulates mRNA stability by recruiting CNOT7/CAF1 deadenylase on mRNA 3'UTR leading to poly(A) tail deadenylation and thus shortening. In response to oxidative insult, associates with stalled ribosomes localized to stress granules (SGs) and contributes to cell survival. Also participates in the normal skeletal muscle formation and regeneration, forming cytoplasmic myo-granules and binding mRNAs that encode sarcomeric proteins. Plays a role in the maintenance of the circadian clock periodicity via stabilization of the CRY1 and CRY2 proteins in a FBXL3-dependent manner. Negatively regulates the expression of CDK6. Regulates the expression of HDAC6, ATG7 and VCP in a PPIA/CYPA-dependent manner. The protein is TAR DNA-binding protein 43 of Homo sapiens (Human).